The primary structure comprises 383 residues: Plant intracellular Ras-group-related LRR protein 8 (383 aa).

10 LRR repeats span residues 56 to 79 (RQNI…SINL), 80 to 102 (ASIS…LVAR), 104 to 126 (LNLW…IGCL), 127 to 149 (SKLK…IEDC), 151 to 173 (SLEE…GFEL), 174 to 197 (TNLT…SYLT), 199 to 219 (LRVL…LENL), 221 to 244 (NLQV…VGLL), 245 to 268 (ISLV…GCLR), and 270 to 290 (IQKL…VVEQ). The short motif at 291–298 (GLEALKQY) is the GVYW; degenerate element.

Belongs to the SHOC2 family. As to expression, widely expressed except flowers.

Its function is as follows. Leucine-rich repeat protein that likely mediates protein interactions, possibly in the context of signal transduction. The chain is Plant intracellular Ras-group-related LRR protein 8 (PIRL8) from Arabidopsis thaliana (Mouse-ear cress).